The sequence spans 110 residues: Phosphoribosyl-ATP pyrophosphatase (110 aa).

The protein belongs to the PRA-PH family.

It is found in the cytoplasm. The enzyme catalyses 1-(5-phospho-beta-D-ribosyl)-ATP + H2O = 1-(5-phospho-beta-D-ribosyl)-5'-AMP + diphosphate + H(+). The protein operates within amino-acid biosynthesis; L-histidine biosynthesis; L-histidine from 5-phospho-alpha-D-ribose 1-diphosphate: step 2/9. This Clostridium novyi (strain NT) protein is Phosphoribosyl-ATP pyrophosphatase.